Reading from the N-terminus, the 25-residue chain is Gastrin-releasing peptide (25 aa).

A Methionine amide modification is found at M25.

This sequence belongs to the bombesin/neuromedin-B/ranatensin family.

It localises to the secreted. The protein localises to the cytoplasmic vesicle. The protein resides in the secretory vesicle lumen. Stimulates the release of gastrin and other gastrointestinal hormones. This chain is Gastrin-releasing peptide (grp), found in Scyliorhinus canicula (Small-spotted catshark).